We begin with the raw amino-acid sequence, 701 residues long: Elongation factor G (701 aa).

The 283-residue stretch at 8–290 folds into the tr-type G domain; sequence SLYRNIGISA…AVVELLPAPT (283 aa). GTP-binding positions include 17–24, 88–92, and 142–145; these read AHIDAGKT, DTPGH, and NKMD.

This sequence belongs to the TRAFAC class translation factor GTPase superfamily. Classic translation factor GTPase family. EF-G/EF-2 subfamily.

It localises to the cytoplasm. In terms of biological role, catalyzes the GTP-dependent ribosomal translocation step during translation elongation. During this step, the ribosome changes from the pre-translocational (PRE) to the post-translocational (POST) state as the newly formed A-site-bound peptidyl-tRNA and P-site-bound deacylated tRNA move to the P and E sites, respectively. Catalyzes the coordinated movement of the two tRNA molecules, the mRNA and conformational changes in the ribosome. The chain is Elongation factor G from Neisseria gonorrhoeae (strain ATCC 700825 / FA 1090).